Here is a 61-residue protein sequence, read N- to C-terminus: Bactridin-1 (61 aa).

Positions 1-61 constitute an LCN-type CS-alpha/beta domain; that stretch reads KDGYIIEHRG…KIFDSNNLKC (61 aa). Intrachain disulfides connect Cys11–Cys61, Cys15–Cys37, Cys23–Cys42, and Cys27–Cys44.

This sequence belongs to the long (4 C-C) scorpion toxin superfamily. Sodium channel inhibitor family. Beta subfamily. As to expression, expressed by the venom gland.

Its subcellular location is the secreted. Shows antibacterial activity against both Gram-positive bacteria (B.subtilis, M.luteus, E.faecalis) and Gram-negative bacteria (P.aeruginosa, Y.enterocolitica, A.calcoaceticus). Modifies membrane sodium permeability on Y.enterocolitica. Is toxic to cockroaches and crabs, but is not toxic to mice. Does not induce haemolysis in human erythrocytes. Acts by inhibiting the sodium (Nav) currents. This Tityus discrepans (Venezuelan scorpion) protein is Bactridin-1.